The primary structure comprises 551 residues: Cilia- and flagella-associated protein 45 (551 aa).

Disordered regions lie at residues 1–30 (MPLSTAGILSSSSAASNRSRNKARYRTKAV) and 461–489 (RLEEEKKATGRLQHANELRRQVRENQQKE). The stretch at 157–526 (NNNKKLSDLE…IKRKKLEELR (370 aa)) forms a coiled coil.

The protein belongs to the CFAP45 family. Microtubule inner protein component of sperm flagellar doublet microtubules. Interacts with AK8; dimerization with AK8 may create a cavity at the interface of the dimer that can accommodate AMP. Interacts with CFAP52. Interacts with ENKUR. Directly interacts with DNALI1. Interacts with DNAH11. Interacts with DNAI1. As to expression, expressed in respiratory cells and in sperm (at protein level). Expressed in nasopharyngeal epithelium and trachea.

It localises to the cytoplasm. The protein resides in the cytoskeleton. The protein localises to the cilium axoneme. Its subcellular location is the flagellum axoneme. It is found in the cell projection. It localises to the cilium. The protein resides in the flagellum. Its function is as follows. Microtubule inner protein (MIP) part of the dynein-decorated doublet microtubules (DMTs) in cilia axoneme, which is required for motile cilia beating. It is an AMP-binding protein that may facilitate dynein ATPase-dependent ciliary and flagellar beating via adenine nucleotide homeostasis. May function as a donor of AMP to AK8 and hence promote ADP production. This Homo sapiens (Human) protein is Cilia- and flagella-associated protein 45.